A 239-amino-acid polypeptide reads, in one-letter code: Small ribosomal subunit protein uS3 (239 aa).

A KH type-2 domain is found at 39–109; sequence IRAMIQEIPE…KVQIKIKEVK (71 aa). Positions 219-239 are disordered; sequence GALLKKQRRPRTEKPAQAGRQ.

The protein belongs to the universal ribosomal protein uS3 family. In terms of assembly, part of the 30S ribosomal subunit. Forms a tight complex with proteins S10 and S14.

Its function is as follows. Binds the lower part of the 30S subunit head. Binds mRNA in the 70S ribosome, positioning it for translation. This Treponema denticola (strain ATCC 35405 / DSM 14222 / CIP 103919 / JCM 8153 / KCTC 15104) protein is Small ribosomal subunit protein uS3.